The primary structure comprises 84 residues: Mu-conotoxin-like Cal 12.2d (84 aa).

The first 19 residues, 1–19, serve as a signal peptide directing secretion; sequence MKLTCVLVVLLLVLPFGDL. A propeptide spanning residues 20 to 42 is cleaved from the precursor; the sequence is ITTSNTEDNKRGATPWQNSLKAR. W72 carries the 6'-bromotryptophan modification. P77 carries the post-translational modification 4-hydroxyproline. Residue W81 is modified to 6'-bromotryptophan.

Belongs to the conotoxin O1 superfamily. In terms of processing, contains 4 disulfide bonds. In terms of tissue distribution, expressed by the venom duct.

It is found in the secreted. Functionally, mu-conotoxins block voltage-gated sodium channels. This toxin reversibly blocks voltage-gated sodium channel in cephalopods, with no alteration in the voltage dependence of sodium conductance or on the kinetics of inactivation. This is Mu-conotoxin-like Cal 12.2d from Californiconus californicus (California cone).